Here is a 252-residue protein sequence, read N- to C-terminus: Small ribosomal subunit protein eS1B (252 aa).

A2 carries the post-translational modification N-acetylalanine; partial. Phosphoserine is present on S251.

The protein belongs to the eukaryotic ribosomal protein eS1 family. In terms of assembly, component of the small ribosomal subunit (SSU). Mature yeast ribosomes consist of a small (40S) and a large (60S) subunit. The 40S small subunit contains 1 molecule of ribosomal RNA (18S rRNA) and at least 33 different proteins. The large 60S subunit contains 3 rRNA molecules (25S, 5.8S and 5S rRNA) and at least 46 different proteins. eS1 interacts directly with uS11 and eS26, which form part of the mRNA exit tunnel.

It is found in the cytoplasm. Functionally, component of the ribosome, a large ribonucleoprotein complex responsible for the synthesis of proteins in the cell. The small ribosomal subunit (SSU) binds messenger RNAs (mRNAs) and translates the encoded message by selecting cognate aminoacyl-transfer RNA (tRNA) molecules. The large subunit (LSU) contains the ribosomal catalytic site termed the peptidyl transferase center (PTC), which catalyzes the formation of peptide bonds, thereby polymerizing the amino acids delivered by tRNAs into a polypeptide chain. The nascent polypeptides leave the ribosome through a tunnel in the LSU and interact with protein factors that function in enzymatic processing, targeting, and the membrane insertion of nascent chains at the exit of the ribosomal tunnel. In Schizosaccharomyces pombe (strain 972 / ATCC 24843) (Fission yeast), this protein is Small ribosomal subunit protein eS1B (rps102).